Consider the following 248-residue polypeptide: Probable transcriptional regulatory protein Mnod_7401 (248 aa).

The protein belongs to the TACO1 family.

The protein resides in the cytoplasm. The sequence is that of Probable transcriptional regulatory protein Mnod_7401 from Methylobacterium nodulans (strain LMG 21967 / CNCM I-2342 / ORS 2060).